A 472-amino-acid chain; its full sequence is MAKDTSYDAVMDRRAEIMSRALGLNYDEFIISDIAFDYEGMMAKAGYSLEEVRQIQSESGVGNTPLLELRNITDLARKTSKRGFGARILIKDEAANPSGSFKDRRASVSIHHAKKLGYPGVLAATSGNYGAAVASQAAMKNLGCIIVQEVFDSRHVGQPEIIEKSRKCEAYGAEVVQLTVGPELFYVSLILLEETGYFNASLYSPFGISGVETLGYELVEQIRARYDKDPAYIVVTHAGGGNVTGTARGALKAGAKNSTIIGASVDLSGLHMASDNDFNKKSFTTGHTGFGVPFATWPDRTDVPKNAARPLRYLDRYVTVTQGEVFYVTEALAQVEGMERGPAGNTSLAAAIALARELPEDEIVVVQETEYTGAGKHPWAQLDFAKQNGIAVKRGAPKENKPGKTIVIPQNFSQITATEMDLNRMRRSYIRNALERNKVKNVTEEDIRFLAEDTKTDADFVTSVIRDLGVRL.

K102 is modified (N6-(pyridoxal phosphate)lysine). Pyridoxal 5'-phosphate-binding positions include N128 and 238–242; that span reads AGGGN.

The protein belongs to the threonine synthase family. In terms of assembly, heterodimer with OrtA. The cofactor is pyridoxal 5'-phosphate.

It carries out the reaction D-alanine + acetyl-CoA = (2R)-2-amino-4-oxopentanoate + CoA. Involved in the ornithine fermentation pathway. Catalyzes the thiolytic cleavage of 2-amino-4-ketopentanoate (AKP) with coenzyme A (CoA) to form acetyl-CoA and alanine. It is strictly specific for AKP. The polypeptide is 2-amino-4-ketopentanoate thiolase beta subunit (Unknown prokaryotic organism).